The sequence spans 325 residues: Quinone oxidoreductase (325 aa).

This sequence belongs to the zinc-containing alcohol dehydrogenase family. Quinone oxidoreductase subfamily.

It catalyses the reaction 2 a quinone + NADPH + H(+) = 2 a 1,4-benzosemiquinone + NADP(+). This is Quinone oxidoreductase (qor) from Pseudomonas aeruginosa (strain ATCC 15692 / DSM 22644 / CIP 104116 / JCM 14847 / LMG 12228 / 1C / PRS 101 / PAO1).